We begin with the raw amino-acid sequence, 559 residues long: Endoglin (559 aa).

Positions methionine 1–alanine 20 are cleaved as a signal peptide. At serine 21–valine 473 the chain is on the extracellular side. Cystine bridges form between cysteine 25-cysteine 201 and cysteine 47-cysteine 174. Asparagine 55, asparagine 79, asparagine 109, asparagine 133, asparagine 170, asparagine 302, and asparagine 352 each carry an N-linked (GlcNAc...) asparagine glycan. A disulfide bridge connects residues cysteine 381 and cysteine 427. A helical membrane pass occupies residues leucine 474 to isoleucine 494. Over lysine 495–alanine 559 the chain is Cytoplasmic. Residues arginine 528 to alanine 559 are disordered. Low complexity predominate over residues serine 536 to serine 546. Polar residues predominate over residues isoleucine 547–alanine 559.

As to quaternary structure, homodimer; disulfide-linked.

Its subcellular location is the cell membrane. Functionally, vascular endothelium glycoprotein that plays an important role in the regulation of angiogenesis. Required for normal structure and integrity of adult vasculature. Important for endothelial cell shape changes in response to blood flow, which drive vascular remodeling and establishment of normal vascular morphology during angiogenesis. This is Endoglin from Danio rerio (Zebrafish).